The sequence spans 254 residues: Glutathione S-transferase U12 (254 aa).

The Nuclear localization signal signature appears at 19-23; sequence KKRKK. Residues 33–114 form the GST N-terminal domain; that stretch reads TTVKLIGTWA…YVDESWPSDL (82 aa). Glutathione-binding positions include 43-44, 71-72, 85-86, and 98-99; these read SP, GK, KV, and ES. In terms of domain architecture, GST C-terminal spans 120 to 252; sequence LPSERAFARF…EFIEFAKKKF (133 aa).

It belongs to the GST superfamily. Tau family.

It localises to the nucleus. It carries out the reaction RX + glutathione = an S-substituted glutathione + a halide anion + H(+). May be involved in the conjugation of reduced glutathione to a wide number of exogenous and endogenous hydrophobic electrophiles and have a detoxification role against certain herbicides. This chain is Glutathione S-transferase U12 (GSTU12), found in Arabidopsis thaliana (Mouse-ear cress).